We begin with the raw amino-acid sequence, 538 residues long: Cytochrome P450 monooxygenase cfoH (538 aa).

A helical transmembrane segment spans residues 24–44 (VLTFFAILLVAILLWYMIPYF). C471 is a binding site for heme.

The protein belongs to the cytochrome P450 family. Requires heme as cofactor.

Its subcellular location is the membrane. The protein operates within secondary metabolite biosynthesis; flavonoid biosynthesis. Functionally, cytochrome P450 monooxygenase; part of the gene cluster that mediates the biosynthesis of chlorflavonin, a fungal flavonoid with acetolactate synthase inhibitory activity. Within the pathway, cfoH is responsible for the hydroxylation of the flavonoid skeleton at position C2'. The pathway begins with the PKS-NRPS hybrid synthetase cfoA that uses benzoic acid or p-hydroxybenzoic acid as a starter unit with four rounds of chain elongation using malonyl-CoA to form the chalcone skeleton. Then, a new type of chalcone isomerase, cfoK, catalyzes the conversion of the chalcone into a flavanone by a histidine-mediated oxa-Michael addition mechanism. The desaturation of flavanone to flavone is catalyzed by a new type of flavone synthase, the flavin mononucleotide (FMN)-dependent oxidoreductase cfoJ. Monooxygenases cfoF, cfoG, and P450 cfoH are responsible for the hydroxylation of the flavonoid skeleton at sites C3, C8, and C2', respectively. Like cfoF, the dehydratase cfoI plays also a role in the hydroxylation of position C3. Methyltransferases cfoB, cfoC, and cfoD then catalyze the methylation of C7-OH, C8-OH, and C3-OH, respectively. Finally, the monooxygenase cfoE is responsible for the chlorination of flavonoid at position C3'. The protein is Cytochrome P450 monooxygenase cfoH of Aspergillus candidus.